A 1016-amino-acid chain; its full sequence is Calmodulin-binding transcription activator 4 (1016 aa).

Positions 38–164 form a DNA-binding region, CG-1; sequence ISTLYQEAHS…YRDVSEREEG (127 aa). The tract at residues 324–343 is disordered; the sequence is KNGSGPSGGTGGSGDQGSES. Residues 328 to 338 show a composition bias toward gly residues; the sequence is GPSGGTGGSGD. ANK repeat units follow at residues 647–676, 680–709, and 719–748; these read QEQGIIHMVAGLGFEWAFYPILAHGVNVDF, KGWSALHWAAQFGSEKMVAALIASGASAGA, and NGKTAASIAASNGHKGLAGYLSEVALTNHL. Positions 753-786 are disordered; it reads LEETENSKDTAQVQTEKTLNSISEQSPSGNEDQV. The span at 761 to 785 shows a compositional bias: polar residues; the sequence is DTAQVQTEKTLNSISEQSPSGNEDQ. 3 consecutive IQ domains span residues 798-827, 855-884, and 878-907; these read AAQAAARIQAAFRAHSFRKRKQREAALVAC, YNSAALSIQKNFRGYKDRKCFLELRQKVVK, and LRQKVVKIQAHVRGYQIRKNYKVICWAVRI. The segment at 903–925 is calmodulin-binding; that stretch reads WAVRILDKVVLRWRRKGVGLRGF. Phosphoserine is present on residues serine 935 and serine 962.

Belongs to the CAMTA family. In terms of tissue distribution, expressed in roots, stems, leaves, flowers and siliques.

It is found in the nucleus. Transcription activator that binds to the DNA consensus sequence 5'-[ACG]CGCG[GTC]-3'. Regulates transcriptional activity in response to calcium signals. Binds calmodulin in a calcium-dependent manner. Involved together with CAMTA2 and CAMTA3 in the positive regulation of a general stress response. In Arabidopsis thaliana (Mouse-ear cress), this protein is Calmodulin-binding transcription activator 4.